The following is a 1049-amino-acid chain: DEAD-box ATP-dependent RNA helicase 42 (1049 aa).

Disordered stretches follow at residues 1–279 (MGSS…DEID) and 299–358 (MPAA…DDEE). The span at 64–106 (KERDREERKAREREEREKEKERERARRREERDREERSRRREAA) shows a compositional bias: basic and acidic residues. Residues 118 to 131 (RKRRRRSSHHHHHH) are compositionally biased toward basic residues. Basic and acidic residues-rich tracts occupy residues 161-170 (KKEEEQKQLD) and 181-199 (KEWQ…REQE). The segment covering 201 to 214 (AGVGTSAAAAAAPA) has biased composition (low complexity). Positions 229 to 239 (DGEESDEEGNQ) are enriched in acidic residues. Positions 262 to 272 (NGGDNANGANA) are enriched in low complexity. Residues 304-313 (VDDKNDKSAK) are compositionally biased toward basic and acidic residues. Residues 335–358 (EDSDSDYADDEDDEGGSEDEDDEE) are compositionally biased toward acidic residues. Residues 424–452 (KTWVQSGLTSKLLDTIKKLGFEKPMSIQA) carry the Q motif motif. One can recognise a Helicase ATP-binding domain in the interval 455–633 (LPIIMSGRDC…RKVLTKPVEI (179 aa)). Position 468 to 475 (468 to 475 (AKTGSGKT)) interacts with ATP. The short motif at 581–584 (DEAD) is the DEAD box element. The 162-residue stretch at 644 to 805 (DITQLVEVRP…AVPEDLKGLA (162 aa)) folds into the Helicase C-terminal domain. The interval 816–868 (TEQAHGTGYGGSGFKFNEEEDEARKSAKKAQAREYGYEEDKSDSDSDEEGGVR) is disordered. Over residues 855–864 (DKSDSDSDEE) the composition is skewed to acidic residues. A coiled-coil region spans residues 1012-1037 (TELSVKKAKAELKRVLEDCANHALNL).

The protein belongs to the DEAD box helicase family. DDX46/PRP5 subfamily.

It carries out the reaction ATP + H2O = ADP + phosphate + H(+). This Oryza sativa subsp. japonica (Rice) protein is DEAD-box ATP-dependent RNA helicase 42.